A 299-amino-acid chain; its full sequence is Bifunctional protein FolD 2 (299 aa).

NADP(+) contacts are provided by residues 168–170 (GRS), S193, and I234.

It belongs to the tetrahydrofolate dehydrogenase/cyclohydrolase family. As to quaternary structure, homodimer.

The catalysed reaction is (6R)-5,10-methylene-5,6,7,8-tetrahydrofolate + NADP(+) = (6R)-5,10-methenyltetrahydrofolate + NADPH. The enzyme catalyses (6R)-5,10-methenyltetrahydrofolate + H2O = (6R)-10-formyltetrahydrofolate + H(+). Its pathway is one-carbon metabolism; tetrahydrofolate interconversion. Its function is as follows. Catalyzes the oxidation of 5,10-methylenetetrahydrofolate to 5,10-methenyltetrahydrofolate and then the hydrolysis of 5,10-methenyltetrahydrofolate to 10-formyltetrahydrofolate. The sequence is that of Bifunctional protein FolD 2 from Rhizobium meliloti (strain 1021) (Ensifer meliloti).